A 414-amino-acid chain; its full sequence is Gamma-glutamyl phosphate reductase (414 aa).

Belongs to the gamma-glutamyl phosphate reductase family.

It is found in the cytoplasm. It catalyses the reaction L-glutamate 5-semialdehyde + phosphate + NADP(+) = L-glutamyl 5-phosphate + NADPH + H(+). Its pathway is amino-acid biosynthesis; L-proline biosynthesis; L-glutamate 5-semialdehyde from L-glutamate: step 2/2. Catalyzes the NADPH-dependent reduction of L-glutamate 5-phosphate into L-glutamate 5-semialdehyde and phosphate. The product spontaneously undergoes cyclization to form 1-pyrroline-5-carboxylate. The sequence is that of Gamma-glutamyl phosphate reductase from Xanthomonas campestris pv. campestris (strain B100).